Consider the following 726-residue polypeptide: Catalase-peroxidase (726 aa).

The tryptophyl-tyrosyl-methioninium (Trp-Tyr) (with M-252) cross-link spans 98-226 (WHSAGTYRMQ…LAAVHMGLIY (129 aa)). Residue His99 is the Proton acceptor of the active site. Residues 226–252 (YVNPEGVNGQPDPARTAQHVRETFARM) constitute a cross-link (tryptophyl-tyrosyl-methioninium (Tyr-Met) (with W-98)). His267 is a heme b binding site.

It belongs to the peroxidase family. Peroxidase/catalase subfamily. As to quaternary structure, homodimer or homotetramer. The cofactor is heme b. In terms of processing, formation of the three residue Trp-Tyr-Met cross-link is important for the catalase, but not the peroxidase activity of the enzyme.

It carries out the reaction H2O2 + AH2 = A + 2 H2O. It catalyses the reaction 2 H2O2 = O2 + 2 H2O. Its function is as follows. Bifunctional enzyme with both catalase and broad-spectrum peroxidase activity. The polypeptide is Catalase-peroxidase (Roseobacter denitrificans (strain ATCC 33942 / OCh 114) (Erythrobacter sp. (strain OCh 114))).